The chain runs to 517 residues: Ribose import ATP-binding protein RbsA 2 (517 aa).

ABC transporter domains lie at 10-245 (LRIE…GRSI) and 255-498 (DAGE…VSTH). An ATP-binding site is contributed by 42–49 (GENGAGKS). The interval 497-517 (THTGNSPHSGGTDGTEASRGH) is disordered.

This sequence belongs to the ABC transporter superfamily. Ribose importer (TC 3.A.1.2.1) family. As to quaternary structure, the complex is composed of an ATP-binding protein (RbsA), two transmembrane proteins (RbsC) and a solute-binding protein (RbsB).

Its subcellular location is the cell membrane. The catalysed reaction is D-ribose(out) + ATP + H2O = D-ribose(in) + ADP + phosphate + H(+). In terms of biological role, part of the ABC transporter complex RbsABC involved in ribose import. Responsible for energy coupling to the transport system. This Streptomyces coelicolor (strain ATCC BAA-471 / A3(2) / M145) protein is Ribose import ATP-binding protein RbsA 2.